An 81-amino-acid chain; its full sequence is UPF0434 protein msl4429 (81 aa).

It belongs to the UPF0434 family.

The sequence is that of UPF0434 protein msl4429 from Mesorhizobium japonicum (strain LMG 29417 / CECT 9101 / MAFF 303099) (Mesorhizobium loti (strain MAFF 303099)).